Here is a 190-residue protein sequence, read N- to C-terminus: uncharacterized protein (190 aa).

This is an uncharacterized protein from Aquifex aeolicus (strain VF5).